Consider the following 247-residue polypeptide: Glucosamine-6-phosphate deaminase (247 aa).

Aspartate 67 acts as the Proton acceptor; for enolization step in catalysis. Asparagine 136 (for ring-opening step) is an active-site residue. Residue histidine 138 is the Proton acceptor; for ring-opening step of the active site. The active-site For ring-opening step is the glutamate 143.

It belongs to the glucosamine/galactosamine-6-phosphate isomerase family. NagB subfamily.

It catalyses the reaction alpha-D-glucosamine 6-phosphate + H2O = beta-D-fructose 6-phosphate + NH4(+). It participates in amino-sugar metabolism; N-acetylneuraminate degradation; D-fructose 6-phosphate from N-acetylneuraminate: step 5/5. Catalyzes the reversible isomerization-deamination of glucosamine 6-phosphate (GlcN6P) to form fructose 6-phosphate (Fru6P) and ammonium ion. This is Glucosamine-6-phosphate deaminase from Shouchella clausii (strain KSM-K16) (Alkalihalobacillus clausii).